Here is a 296-residue protein sequence, read N- to C-terminus: Enoyl-CoA hydratase AKT3-2 (296 aa).

Residues 294-296 (PKL) carry the Peroxisomal targeting signal type 1 motif.

This sequence belongs to the enoyl-CoA hydratase/isomerase family.

The protein resides in the peroxisome. It carries out the reaction a (3S)-3-hydroxyacyl-CoA = a (2E)-enoyl-CoA + H2O. It catalyses the reaction a 4-saturated-(3S)-3-hydroxyacyl-CoA = a (3E)-enoyl-CoA + H2O. It participates in mycotoxin biosynthesis. Functionally, enoyl-CoA hydratase; part of the gene clusters that mediate the biosynthesis of the host-selective toxins (HSTs) AK-toxins responsible for Japanese pear black spot disease by the Japanese pear pathotype. AK-toxins are esters of 9,10-epoxy 8-hydroxy 9-methyldecatrienoic acid (EDA). On cellular level, AK-toxins affect plasma membrane of susceptible cells and cause a sudden increase in loss of K(+) after a few minutes of toxin treatment. The acyl-CoA ligase AKT1, the hydrolase AKT2 and enoyl-CoA hydratase AKT3 are all involved in the biosynthesis of the AK-, AF- and ACT-toxin common 9,10-epoxy-8-hydroxy-9-methyl-decatrienoic acid (EDA) structural moiety. Part of the EDA biosynthesis occurs in the peroxisome since these 3 enzymes are localized in peroxisomes. The exact roles of the 3 enzymes, as well as of additional AK-toxin clusters enzymes, including AKT4, AKT6 and AKTS1, have still to be elucidated. The Cytochrome P450 monooxygenase AKT7 on the other side functions to limit production of EDA and AK-toxin, probably via the catalysis of a side reaction of EDA or its precursor. The polypeptide is Enoyl-CoA hydratase AKT3-2 (Alternaria alternata (Alternaria rot fungus)).